A 155-amino-acid chain; its full sequence is NADPH-dependent 7-cyano-7-deazaguanine reductase (155 aa).

Catalysis depends on C53, which acts as the Thioimide intermediate. The Proton donor role is filled by D60. Residues 75 to 77 and 94 to 95 contribute to the substrate site; these read VES and HE.

This sequence belongs to the GTP cyclohydrolase I family. QueF type 1 subfamily.

It is found in the cytoplasm. The catalysed reaction is 7-aminomethyl-7-carbaguanine + 2 NADP(+) = 7-cyano-7-deazaguanine + 2 NADPH + 3 H(+). Its pathway is tRNA modification; tRNA-queuosine biosynthesis. Catalyzes the NADPH-dependent reduction of 7-cyano-7-deazaguanine (preQ0) to 7-aminomethyl-7-deazaguanine (preQ1). The chain is NADPH-dependent 7-cyano-7-deazaguanine reductase from Brucella anthropi (strain ATCC 49188 / DSM 6882 / CCUG 24695 / JCM 21032 / LMG 3331 / NBRC 15819 / NCTC 12168 / Alc 37) (Ochrobactrum anthropi).